Here is a 107-residue protein sequence, read N- to C-terminus: Immunoglobulin kappa constant (107 aa).

An Ig-like domain is found at 6–103 (PTVSIFPPSS…STSPIVKSFN (98 aa)). A disulfide bond links Cys-27 and Cys-87.

The chain is Immunoglobulin kappa constant from Mus musculus (Mouse).